The following is a 146-amino-acid chain: uncharacterized protein (146 aa).

In terms of domain architecture, HTH marR-type spans 9–141; sequence VADIEKSLRH…FEKSLMKLQH (133 aa). Positions 55-78 form a DNA-binding region, H-T-H motif; that stretch reads IGELSGKMYLACSTTTDLIDRMQK.

This is an uncharacterized protein from Bacillus subtilis (strain 168).